Reading from the N-terminus, the 470-residue chain is Sorting nexin-17 (470 aa).

The 109-residue stretch at 1–109 folds into the PX domain; it reads MHFSIPETES…SFLRRAQQET (109 aa). Arg-36, Ser-38, Lys-62, and Arg-75 together coordinate a 1,2-diacyl-sn-glycero-3-phospho-(1D-myo-inositol-3-phosphate). Residues 115–206 form the Ras-associating domain; the sequence is EEVSLEVLLS…YKIVLRKSYW (92 aa). The interval 115–432 is FERM-like; the sequence is EEVSLEVLLS…DATRESMVKL (318 aa). Positions 270 to 432 are PTB-like F3 module; that stretch reads GYLRFDACVA…DATRESMVKL (163 aa). 7 positions are modified to phosphoserine: Ser-336, Ser-407, Ser-409, Ser-415, Ser-421, Ser-437, and Ser-440. The segment at 400–425 is disordered; it reads VGGTLRRSDSQQAVKSPPLLESPDAT.

The protein belongs to the sorting nexin family. In terms of assembly, monomer. Interacts with APP (via cytoplasmic YXNPXY motif). Interacts with KIF1B. Interacts with the C-termini of P-selectin, PTC, LDLR, VLDLR, LRP1 and LRP8. Interacts with KRIT1 (via N-terminus). Interacts with HRAS. Interacts with ITGB1 and ITGB5 (via NPxY motif). Interacts with CCDC22 and CCDC93; the interaction associates SNX17 with the CCC complex. Interacts (via C-terminus) with VPS26C and VPS35L; the interactions are direct and associate SNX17 with the retriever complex.

The protein resides in the cytoplasm. It is found in the early endosome. Its subcellular location is the cytoplasmic vesicle membrane. Critical regulator of endosomal recycling of numerous surface proteins, including integrins, signaling receptor and channels. Binds to NPxY sequences in the cytoplasmic tails of target cargos. Associates with retriever and CCC complexes to prevent lysosomal degradation and promote cell surface recycling of numerous cargos such as integrins ITGB1, ITGB5 and their associated alpha subunits. Also required for maintenance of normal cell surface levels of APP and LRP1. Interacts with membranes containing phosphatidylinositol 3-phosphate (PtdIns(3P)). This chain is Sorting nexin-17 (SNX17), found in Pongo abelii (Sumatran orangutan).